We begin with the raw amino-acid sequence, 412 residues long: Chorismate synthase (412 aa).

NADP(+) is bound by residues Arg-40 and Arg-46. FMN is bound by residues 134-136 (RAS), 255-256 (QA), Gly-299, 314-318 (KPIAT), and Arg-340.

This sequence belongs to the chorismate synthase family. In terms of assembly, homotetramer. It depends on FMNH2 as a cofactor.

It carries out the reaction 5-O-(1-carboxyvinyl)-3-phosphoshikimate = chorismate + phosphate. It functions in the pathway metabolic intermediate biosynthesis; chorismate biosynthesis; chorismate from D-erythrose 4-phosphate and phosphoenolpyruvate: step 7/7. Functionally, catalyzes the anti-1,4-elimination of the C-3 phosphate and the C-6 proR hydrogen from 5-enolpyruvylshikimate-3-phosphate (EPSP) to yield chorismate, which is the branch point compound that serves as the starting substrate for the three terminal pathways of aromatic amino acid biosynthesis. This reaction introduces a second double bond into the aromatic ring system. In Clavibacter michiganensis subsp. michiganensis (strain NCPPB 382), this protein is Chorismate synthase.